Here is a 186-residue protein sequence, read N- to C-terminus: Intraflagellar transport protein 27 homolog (186 aa).

Residues 12–19 (GDPAVGKT), 64–68 (DSAGK), and 123–126 (NKTD) each bind GTP.

The protein belongs to the small GTPase superfamily. Rab family. As to quaternary structure, component of the IFT complex B, at least composed of IFT20, IFT25, IFT27, IFT52, IFT57, IFT74, IFT81, IFT88 and TRAF3IP1. Interacts with IFT25. Interacts with IFT70B. Interacts with RABL2/RABL2A; binding is equal in the presence of GTP or GDP. Interacts with ARL6; recognizes and binds with the GTP-free form of ARL6.

The protein resides in the cell projection. It is found in the cilium. The protein localises to the cytoplasm. It localises to the flagellum. Its function is as follows. Small GTPase-like component of the intraflagellar transport (IFT) complex B that promotes the exit of the BBSome complex from cilia via its interaction with ARL6. Not involved in entry of the BBSome complex into cilium. Prevents aggregation of GTP-free ARL6. Required for hedgehog signaling. Forms a subcomplex within the IFT complex B with IFT25. Its role in intraflagellar transport is mainly seen in tissues rich in ciliated cells such as kidney and testis. Essential for male fertility, spermiogenesis and sperm flagella formation. Plays a role in the early development of the kidney. May be involved in the regulation of ureteric bud initiation. This chain is Intraflagellar transport protein 27 homolog (IFT27), found in Homo sapiens (Human).